The chain runs to 122 residues: Cytochrome b-c1 complex subunit 7-2, mitochondrial (122 aa).

This sequence belongs to the UQCRB/QCR7 family. As to quaternary structure, component of the ubiquinol-cytochrome c oxidoreductase (cytochrome b-c1 complex, complex III, CIII), a multisubunit enzyme composed of 10 subunits. The complex is composed of 3 respiratory subunits cytochrome b (MT-CYB), cytochrome c1 (CYC1-1 or CYC1-2) and Rieske protein (UCR1-1 or UCR1-2), 2 core protein subunits MPPalpha1 (or MPPalpha2) and MPPB, and 5 low-molecular weight protein subunits QCR7-1 (or QCR7-2), UCRQ-1 (or UCRQ-2), QCR9, UCRY and probably QCR6-1 (or QCR6-2). The complex exists as an obligatory dimer and forms supercomplexes (SCs) in the inner mitochondrial membrane with NADH-ubiquinone oxidoreductase (complex I, CI), resulting in different assemblies (supercomplexes SCI(1)III(2) and SCI(2)III(4)).

The protein resides in the mitochondrion inner membrane. Component of the ubiquinol-cytochrome c oxidoreductase, a multisubunit transmembrane complex that is part of the mitochondrial electron transport chain which drives oxidative phosphorylation. The respiratory chain contains 3 multisubunit complexes succinate dehydrogenase (complex II, CII), ubiquinol-cytochrome c oxidoreductase (cytochrome b-c1 complex, complex III, CIII) and cytochrome c oxidase (complex IV, CIV), that cooperate to transfer electrons derived from NADH and succinate to molecular oxygen, creating an electrochemical gradient over the inner membrane that drives transmembrane transport and the ATP synthase. The cytochrome b-c1 complex catalyzes electron transfer from ubiquinol to cytochrome c, linking this redox reaction to translocation of protons across the mitochondrial inner membrane, with protons being carried across the membrane as hydrogens on the quinol. In the process called Q cycle, 2 protons are consumed from the matrix, 4 protons are released into the intermembrane space and 2 electrons are passed to cytochrome c. The protein is Cytochrome b-c1 complex subunit 7-2, mitochondrial (QCR7-2) of Arabidopsis thaliana (Mouse-ear cress).